A 542-amino-acid polypeptide reads, in one-letter code: Phosphoacetylglucosamine mutase 2 (542 aa).

Serine 77 (phosphoserine intermediate) is an active-site residue. Residue serine 77 coordinates Mg(2+). 2 positions are modified to phosphoserine: serine 77 and serine 82. Mg(2+) is bound by residues aspartate 292, aspartate 294, and aspartate 296. Substrate contacts are provided by residues 385–387 (EAN), 510–514 (RSSGT), and arginine 519.

This sequence belongs to the phosphohexose mutase family. Mg(2+) serves as cofactor.

It localises to the cytoplasm. The protein resides in the nucleus. It carries out the reaction N-acetyl-alpha-D-glucosamine 1-phosphate = N-acetyl-D-glucosamine 6-phosphate. Its pathway is nucleotide-sugar biosynthesis; UDP-N-acetyl-alpha-D-glucosamine biosynthesis; N-acetyl-alpha-D-glucosamine 1-phosphate from alpha-D-glucosamine 6-phosphate (route I): step 2/2. Functionally, catalyzes the conversion of GlcNAc-6-P into GlcNAc-1-P during the synthesis of uridine diphosphate/UDP-GlcNAc, which is a biosynthetic precursor of chitin and also supplies the amino sugars for N-linked oligosaccharides of glycoproteins. The polypeptide is Phosphoacetylglucosamine mutase 2 (Schizosaccharomyces pombe (strain 972 / ATCC 24843) (Fission yeast)).